The following is a 401-amino-acid chain: MDSEFLELTQLLPRWVDLENVVRGEVEARYILKRAADHLANLRSGGDSGAEETGYLVGALVDRNWERIHTGHFSQVPLVTRKIYAIACCFKIFFLLLESTSPAQKDACSEILDEAQLLGCMEDWSELKVALMDYLDKDGAVALNSAPLPTLEPLTRVTSNCDIPQLDAPSLEEFQTKCFEAGQPTLLLNTIQHWPALHKWLDLNYLLQVAGNRTVPIEIGSNYASDEWSQQLVKIRDFLSRQFGKEPSKAGQNIEYLAQHELFAQIPALKEDISIPDYCTISNEDTPGAVDIKAWLGPAGTVSPMHYDPKHNLLCQVFGSKRIILAAPADTDNLYPHDSEFLANTARIDAAQLDPETYPLVAKVKFYQLLLQPGDCLYMPPKWWHYVRSEAPSFSVSFWWE.

In terms of domain architecture, JmjC spans 255–401 (EYLAQHELFA…PSFSVSFWWE (147 aa)). Histidine 306, aspartate 308, and histidine 385 together coordinate Fe cation.

It depends on Fe(2+) as a cofactor. Expressed in neurons close to the dorsal lateral neurons involved in circadian rhythm.

Its subcellular location is the nucleus. The protein resides in the nucleoplasm. The protein localises to the cytoplasm. It carries out the reaction L-arginyl-[protein] + 2-oxoglutarate + O2 = (3R)-3-hydroxy-L-arginyl-[protein] + succinate + CO2. In terms of biological role, bifunctional enzyme that acts both as an endopeptidase and 2-oxoglutarate-dependent monooxygenase. May be involved in regulation of behavior and circadian rhythms. The chain is Jumonji C domain-containing protein 5 from Drosophila melanogaster (Fruit fly).